Here is a 105-residue protein sequence, read N- to C-terminus: Multidrug resistance protein EbrA (105 aa).

A run of 4 helical transmembrane segments spans residues 2-22 (LIGY…AAML), 35-55 (ALVV…LNHI), 57-77 (LSLS…VIGV), and 84-104 (LNAK…LLNW).

The protein belongs to the drug/metabolite transporter (DMT) superfamily. Small multidrug resistance (SMR) (TC 2.A.7.1) family. EbrA/EbrB subfamily. The efflux pump is composed of EbrA and EbrB.

The protein localises to the cell membrane. In terms of biological role, part of a multidrug efflux pump. Confers resistance to cationic lipophilic dyes such as ethidium bromide, acriflavine, pyronine Y and safranin O. The efflux is probably coupled to an influx of protons. The polypeptide is Multidrug resistance protein EbrA (ebrA) (Bacillus subtilis (strain 168)).